Here is a 62-residue protein sequence, read N- to C-terminus: Photosystem II reaction center protein Z (62 aa).

A run of 2 helical transmembrane segments spans residues 8–28 (AVFA…VALA) and 41–61 (FSGV…NSFI).

Belongs to the PsbZ family. PSII is composed of 1 copy each of membrane proteins PsbA, PsbB, PsbC, PsbD, PsbE, PsbF, PsbH, PsbI, PsbJ, PsbK, PsbL, PsbM, PsbT, PsbY, PsbZ, Psb30/Ycf12, at least 3 peripheral proteins of the oxygen-evolving complex and a large number of cofactors. It forms dimeric complexes.

It localises to the plastid. It is found in the chloroplast thylakoid membrane. May control the interaction of photosystem II (PSII) cores with the light-harvesting antenna, regulates electron flow through the 2 photosystem reaction centers. PSII is a light-driven water plastoquinone oxidoreductase, using light energy to abstract electrons from H(2)O, generating a proton gradient subsequently used for ATP formation. The chain is Photosystem II reaction center protein Z from Pinus thunbergii (Japanese black pine).